Here is a 332-residue protein sequence, read N- to C-terminus: MAELFYDADADLSIIQGRKVAVIGYGSQGHAHALSLRDSGVDVRVGLHEGSKSKAKAEEQGLRVVPVAEAAAEADVIMILVPDPIQAEVYEKDIKDNLKDGDALFFGHGLNIRYGFIKPPAGVDVCMVAPKGPGHLVRRQYEEGRGVPCIAAVEQDATGNAFALALSYAKGIGGTRAGVIKTTFTEETETDLFGEQAVLCGGTAALVKAGFETLTEAGYQPEIAYFECLHELKLIVDLMYEGGLEKMRWSISETAEWGDYVTGPRIITDATKAEMKKVLAEIQDGTFAKNWMDEYHGGLKKYNEYKKQDSEHLLETTGKELRKLMSWVDEEA.

The KARI N-terminal Rossmann domain occupies 2 to 182 (AELFYDADAD…GGTRAGVIKT (181 aa)). NADP(+) contacts are provided by residues 25–28 (YGSQ), S51, S53, and 83–86 (DPIQ). H108 is a catalytic residue. Residue G134 participates in NADP(+) binding. Residues 183-328 (TFTEETETDL…KELRKLMSWV (146 aa)) form the KARI C-terminal knotted domain. The Mg(2+) site is built by D191, E195, E227, and E231. S252 serves as a coordination point for substrate.

The protein belongs to the ketol-acid reductoisomerase family. Requires Mg(2+) as cofactor.

The enzyme catalyses (2R)-2,3-dihydroxy-3-methylbutanoate + NADP(+) = (2S)-2-acetolactate + NADPH + H(+). It carries out the reaction (2R,3R)-2,3-dihydroxy-3-methylpentanoate + NADP(+) = (S)-2-ethyl-2-hydroxy-3-oxobutanoate + NADPH + H(+). It participates in amino-acid biosynthesis; L-isoleucine biosynthesis; L-isoleucine from 2-oxobutanoate: step 2/4. Its pathway is amino-acid biosynthesis; L-valine biosynthesis; L-valine from pyruvate: step 2/4. In terms of biological role, involved in the biosynthesis of branched-chain amino acids (BCAA). Catalyzes an alkyl-migration followed by a ketol-acid reduction of (S)-2-acetolactate (S2AL) to yield (R)-2,3-dihydroxy-isovalerate. In the isomerase reaction, S2AL is rearranged via a Mg-dependent methyl migration to produce 3-hydroxy-3-methyl-2-ketobutyrate (HMKB). In the reductase reaction, this 2-ketoacid undergoes a metal-dependent reduction by NADPH to yield (R)-2,3-dihydroxy-isovalerate. The polypeptide is Ketol-acid reductoisomerase (NADP(+)) 1 (Streptomyces coelicolor (strain ATCC BAA-471 / A3(2) / M145)).